The following is a 1226-amino-acid chain: Polyamine-transporting ATPase 13A3 (1226 aa).

The Cytoplasmic portion of the chain corresponds to 1–28; it reads MDREERKTINQGQEDEMEIYGYNLSRWK. Residues 29–49 lie within the membrane without spanning it; it reads LAIVSLGVICSGGFLLLLLYW. The Cytoplasmic segment spans residues 50–205; the sequence is MPEWRVKATC…IAVKVPSVFK (156 aa). S98 carries the post-translational modification Phosphoserine. Residues 206 to 226 form a helical membrane-spanning segment; sequence LLIKEVLNPFYIFQLFSVILW. The Lumenal portion of the chain corresponds to 227 to 232; it reads STDEYY. Residues 233 to 253 traverse the membrane as a helical segment; sequence YYALAIVVMSIVSIVSSLYSI. At 254 to 409 the chain is on the cytoplasmic side; the sequence is RKQYVMLHDM…KPTDFKLYRD (156 aa). A helical membrane pass occupies residues 410 to 430; the sequence is AYLFLLCLVAVAGIGFIYTII. Topologically, residues 431–448 are lumenal; the sequence is NSILNEVQVGVIIIESLD. The chain crosses the membrane as a helical span at residues 449-469; the sequence is IITITVPPALPAAMTAGIVYA. Over 470–940 the chain is Cytoplasmic; that stretch reads QRRLKKIGIF…ALITSFCVFK (471 aa). Residue D498 is the 4-aspartylphosphate intermediate of the active site. Residues D498 and T500 each coordinate Mg(2+). Residues 498-500, F628, R684, and D750 contribute to the ATP site; that span reads DKT. S817 is modified (phosphoserine). Positions 883 and 887 each coordinate Mg(2+). 883–887 serves as a coordination point for ATP; the sequence is DGAND. The helical transmembrane segment at 941 to 961 threads the bilayer; sequence FMALYSIIQYFSVTLLYSILS. A topological domain (lumenal) is located at residue N962. Residues 963–983 form a helical membrane-spanning segment; sequence LGDFQFLFIDLAIILVVVFTM. The Cytoplasmic portion of the chain corresponds to 984 to 999; sequence SLNPAWKELVAQRPPS. A helical transmembrane segment spans residues 1000–1020; it reads GLISGALLFSVLSQIIICIGF. At 1021 to 1073 the chain is on the lumenal side; sequence QSLGFFWVKQQPWYEVWHPKSDACNTTGSGFWNSSHVDNETELDEHNIQNYEN. The helical transmembrane segment at 1074-1094 threads the bilayer; that stretch reads TTVFFISSFQYLIVAIAFSKG. At 1095–1105 the chain is on the cytoplasmic side; it reads KPFRQPCYKNY. A helical membrane pass occupies residues 1106 to 1126; that stretch reads FFVFSVIFLYIFILFIMLYPV. Residues 1127–1143 are Lumenal-facing; that stretch reads ASVDQVLQIVCVPYQWR. Residues 1144-1164 form a helical membrane-spanning segment; that stretch reads VTMLIIVLVNAFVSITVEESV. The Cytoplasmic portion of the chain corresponds to 1165–1226; the sequence is DRWGKCCLPW…NGSCQIITIT (62 aa).

Belongs to the cation transport ATPase (P-type) (TC 3.A.3) family. Type V subfamily. Broadly expressed.

The protein resides in the recycling endosome membrane. It localises to the early endosome membrane. Its subcellular location is the late endosome membrane. The enzyme catalyses putrescine(out) + ATP + H2O = putrescine(in) + ADP + phosphate + H(+). Functionally, ATP-driven pump involved in endocytosis-dependent polyamine transport. Uses ATP as an energy source to transfer polyamine precursor putrescine from the endosomal compartment to the cytosol. The protein is Polyamine-transporting ATPase 13A3 of Homo sapiens (Human).